A 299-amino-acid polypeptide reads, in one-letter code: Oxygen-dependent coproporphyrinogen-III oxidase (299 aa).

Ser92 contacts substrate. His96 and His106 together coordinate Mn(2+). Catalysis depends on His106, which acts as the Proton donor. A substrate-binding site is contributed by 108–110; sequence NVR. 2 residues coordinate Mn(2+): His145 and His175. Residues 240-275 are important for dimerization; sequence YVEFNLVWDRGTLFGLQTGGRTESILMSMPPLVRWE. Residue 258-260 participates in substrate binding; sequence GGR.

The protein belongs to the aerobic coproporphyrinogen-III oxidase family. In terms of assembly, homodimer. It depends on Mn(2+) as a cofactor.

Its subcellular location is the cytoplasm. The enzyme catalyses coproporphyrinogen III + O2 + 2 H(+) = protoporphyrinogen IX + 2 CO2 + 2 H2O. Its pathway is porphyrin-containing compound metabolism; protoporphyrin-IX biosynthesis; protoporphyrinogen-IX from coproporphyrinogen-III (O2 route): step 1/1. Functionally, involved in the heme biosynthesis. Catalyzes the aerobic oxidative decarboxylation of propionate groups of rings A and B of coproporphyrinogen-III to yield the vinyl groups in protoporphyrinogen-IX. This is Oxygen-dependent coproporphyrinogen-III oxidase from Escherichia coli (strain SMS-3-5 / SECEC).